The following is a 149-amino-acid chain: Protein E6 (149 aa).

Zinc fingers lie at residues 30–66 and 103–139; these read CVYC…CMKC and CITC…CMSC. The short motif at 147–149 is the PDZ-binding domain element; the sequence is TEV.

Belongs to the papillomaviridae E6 protein family. As to quaternary structure, forms homodimers. Interacts with ubiquitin-protein ligase UBE3A/E6-AP and thus forms a complex with human TP53. Interacts with human NFX1 and MAGI3. Interacts with human IRF3; this interaction inhibits the establishment of antiviral state. Interacts with human TYK2; this interaction inhibits JAK-STAT activation by interferon alpha. Interacts with host DLG1; this interaction leads to the proteasomal degradation of DLG1.

The protein resides in the host cytoplasm. It is found in the host nucleus. This protein may be involved in the oncogenic potential of this virus (associated with cancer of the uterine cervix). Functionally, plays a major role in the induction and maintenance of cellular transformation. Acts mainly as an oncoprotein by stimulating the destruction of many host cell key regulatory proteins. E6 associates with host UBE3A/E6-AP ubiquitin-protein ligase, and inactivates tumor suppressors TP53 and TP73 by targeting them to the 26S proteasome for degradation. In turn, DNA damage and chromosomal instabilities increase and lead to cell proliferation and cancer development. The complex E6/E6AP targets several other substrates to degradation via the proteasome including host DLG1 or NFX1, a repressor of human telomerase reverse transcriptase (hTERT). The resulting increased expression of hTERT prevents the shortening of telomere length leading to cell immortalization. Other cellular targets including BAK1, Fas-associated death domain-containing protein (FADD) and procaspase 8, are degraded by E6/E6AP causing inhibition of apoptosis. E6 also inhibits immune response by interacting with host IRF3 and TYK2. These interactions prevent IRF3 transcriptional activities and inhibit TYK2-mediated JAK-STAT activation by interferon alpha resulting in inhibition of the interferon signaling pathway. The chain is Protein E6 from Human papillomavirus 35.